The chain runs to 206 residues: MIPAKPFLCVITDEQCSSPVDLALMALEGGAEMIQLRHKSASGKQLFQWALDIQRLCRIHHAQFIVNDRVDIALAMNADGVHLGQQDLQPGEARKLLGTDKIIGVSTSSLTEALNAERAGADYIGFGHIFQTGSKNKLSAPLGSAAISAVVQRISIPLVAIGGINKMNMMETIAAGASGIAMIAAISRTADPEGATRAITELLKGH.

4-amino-2-methyl-5-(diphosphooxymethyl)pyrimidine-binding positions include 35 to 39 (QLRHK) and Asn-67. 2 residues coordinate Mg(2+): Asp-68 and Asp-87. Residue Ser-106 participates in 4-amino-2-methyl-5-(diphosphooxymethyl)pyrimidine binding. 132–134 (TGS) is a binding site for 2-[(2R,5Z)-2-carboxy-4-methylthiazol-5(2H)-ylidene]ethyl phosphate. 4-amino-2-methyl-5-(diphosphooxymethyl)pyrimidine is bound at residue Lys-135. Gly-163 contacts 2-[(2R,5Z)-2-carboxy-4-methylthiazol-5(2H)-ylidene]ethyl phosphate.

Belongs to the thiamine-phosphate synthase family. Mg(2+) serves as cofactor.

The catalysed reaction is 2-[(2R,5Z)-2-carboxy-4-methylthiazol-5(2H)-ylidene]ethyl phosphate + 4-amino-2-methyl-5-(diphosphooxymethyl)pyrimidine + 2 H(+) = thiamine phosphate + CO2 + diphosphate. It catalyses the reaction 2-(2-carboxy-4-methylthiazol-5-yl)ethyl phosphate + 4-amino-2-methyl-5-(diphosphooxymethyl)pyrimidine + 2 H(+) = thiamine phosphate + CO2 + diphosphate. The enzyme catalyses 4-methyl-5-(2-phosphooxyethyl)-thiazole + 4-amino-2-methyl-5-(diphosphooxymethyl)pyrimidine + H(+) = thiamine phosphate + diphosphate. The protein operates within cofactor biosynthesis; thiamine diphosphate biosynthesis; thiamine phosphate from 4-amino-2-methyl-5-diphosphomethylpyrimidine and 4-methyl-5-(2-phosphoethyl)-thiazole: step 1/1. Condenses 4-methyl-5-(beta-hydroxyethyl)thiazole monophosphate (THZ-P) and 2-methyl-4-amino-5-hydroxymethyl pyrimidine pyrophosphate (HMP-PP) to form thiamine monophosphate (TMP). This chain is Thiamine-phosphate synthase, found in Chlorobium phaeobacteroides (strain DSM 266 / SMG 266 / 2430).